A 593-amino-acid polypeptide reads, in one-letter code: Genetic interactor of prohibitins 3, mitochondrial (593 aa).

A mitochondrion-targeting transit peptide spans methionine 1–proline 61. Positions valine 142 to asparagine 349 constitute a CP-type G domain.

It belongs to the TRAFAC class YlqF/YawG GTPase family. GEP3 subfamily.

The protein localises to the mitochondrion. In terms of biological role, may be involved in the mitochondrial lipid metabolism. This is Genetic interactor of prohibitins 3, mitochondrial (GEP3) from Debaryomyces hansenii (strain ATCC 36239 / CBS 767 / BCRC 21394 / JCM 1990 / NBRC 0083 / IGC 2968) (Yeast).